The following is a 255-amino-acid chain: 5-oxoprolinase subunit A (255 aa).

This sequence belongs to the LamB/PxpA family. As to quaternary structure, forms a complex composed of PxpA, PxpB and PxpC.

It carries out the reaction 5-oxo-L-proline + ATP + 2 H2O = L-glutamate + ADP + phosphate + H(+). Its function is as follows. Catalyzes the cleavage of 5-oxoproline to form L-glutamate coupled to the hydrolysis of ATP to ADP and inorganic phosphate. This Campylobacter jejuni subsp. doylei (strain ATCC BAA-1458 / RM4099 / 269.97) protein is 5-oxoprolinase subunit A.